Consider the following 237-residue polypeptide: Aliphatic sulfonates import ATP-binding protein SsuB 1 (237 aa).

The ABC transporter domain maps to 5-221 (LMNIRVDRKA…PRDRRDPLLA (217 aa)). 38-45 (GPSGCGKS) is a binding site for ATP.

It belongs to the ABC transporter superfamily. Aliphatic sulfonates importer (TC 3.A.1.17.2) family. The complex is composed of two ATP-binding proteins (SsuB), two transmembrane proteins (SsuC) and a solute-binding protein (SsuA).

It localises to the cell inner membrane. The enzyme catalyses ATP + H2O + aliphatic sulfonate-[sulfonate-binding protein]Side 1 = ADP + phosphate + aliphatic sulfonateSide 2 + [sulfonate-binding protein]Side 1.. Part of the ABC transporter complex SsuABC involved in aliphatic sulfonates import. Responsible for energy coupling to the transport system. This chain is Aliphatic sulfonates import ATP-binding protein SsuB 1, found in Pseudomonas savastanoi pv. phaseolicola (strain 1448A / Race 6) (Pseudomonas syringae pv. phaseolicola (strain 1448A / Race 6)).